Here is a 296-residue protein sequence, read N- to C-terminus: Homoserine kinase (296 aa).

Position 84–94 (84–94 (PLARGLGSSSS)) interacts with ATP.

This sequence belongs to the GHMP kinase family. Homoserine kinase subfamily.

It is found in the cytoplasm. The enzyme catalyses L-homoserine + ATP = O-phospho-L-homoserine + ADP + H(+). It participates in amino-acid biosynthesis; L-threonine biosynthesis; L-threonine from L-aspartate: step 4/5. Its function is as follows. Catalyzes the ATP-dependent phosphorylation of L-homoserine to L-homoserine phosphate. This chain is Homoserine kinase (thrB), found in Lactococcus lactis subsp. cremoris (Streptococcus cremoris).